Consider the following 114-residue polypeptide: UPF0342 protein SSP0954 (114 aa).

It belongs to the UPF0342 family.

This is UPF0342 protein SSP0954 from Staphylococcus saprophyticus subsp. saprophyticus (strain ATCC 15305 / DSM 20229 / NCIMB 8711 / NCTC 7292 / S-41).